The primary structure comprises 830 residues: DNA gyrase subunit A (830 aa).

The Topo IIA-type catalytic domain maps to 33–497 (LPDVRDGLKP…AENDIDIEDL (465 aa)). Tyrosine 121 acts as the O-(5'-phospho-DNA)-tyrosine intermediate in catalysis. Positions 524 to 530 (QKRGGRG) match the GyrA-box motif. A disordered region spans residues 805-830 (KDDSEQLEDSEEVSEVHDAEENNSEE).

Belongs to the type II topoisomerase GyrA/ParC subunit family. In terms of assembly, heterotetramer, composed of two GyrA and two GyrB chains. In the heterotetramer, GyrA contains the active site tyrosine that forms a transient covalent intermediate with DNA, while GyrB binds cofactors and catalyzes ATP hydrolysis.

It is found in the cytoplasm. The enzyme catalyses ATP-dependent breakage, passage and rejoining of double-stranded DNA.. In terms of biological role, a type II topoisomerase that negatively supercoils closed circular double-stranded (ds) DNA in an ATP-dependent manner to modulate DNA topology and maintain chromosomes in an underwound state. Negative supercoiling favors strand separation, and DNA replication, transcription, recombination and repair, all of which involve strand separation. Also able to catalyze the interconversion of other topological isomers of dsDNA rings, including catenanes and knotted rings. Type II topoisomerases break and join 2 DNA strands simultaneously in an ATP-dependent manner. The sequence is that of DNA gyrase subunit A from Clostridium acetobutylicum (strain ATCC 824 / DSM 792 / JCM 1419 / IAM 19013 / LMG 5710 / NBRC 13948 / NRRL B-527 / VKM B-1787 / 2291 / W).